Reading from the N-terminus, the 474-residue chain is Phenylalanine--tRNA ligase alpha subunit (474 aa).

Residues Thr-317, 356–358 (QLE), and Tyr-396 each bind L-phenylalanine. Glu-398 contacts Mg(2+). Residue Phe-421 coordinates L-phenylalanine.

This sequence belongs to the class-II aminoacyl-tRNA synthetase family. Phe-tRNA synthetase alpha subunit type 2 subfamily. In terms of assembly, tetramer of two alpha and two beta subunits. It depends on Mg(2+) as a cofactor.

The protein localises to the cytoplasm. The enzyme catalyses tRNA(Phe) + L-phenylalanine + ATP = L-phenylalanyl-tRNA(Phe) + AMP + diphosphate + H(+). The sequence is that of Phenylalanine--tRNA ligase alpha subunit from Methanocorpusculum labreanum (strain ATCC 43576 / DSM 4855 / Z).